Reading from the N-terminus, the 404-residue chain is Probable tRNA sulfurtransferase (404 aa).

The region spanning 60–165 (HEVAESLKEI…DEAAYISYEN (106 aa)) is the THUMP domain. Residues 183 to 184 (ML), 208 to 209 (HF), Arg265, Gly287, and Gln296 each bind ATP.

It belongs to the ThiI family.

Its subcellular location is the cytoplasm. It carries out the reaction [ThiI sulfur-carrier protein]-S-sulfanyl-L-cysteine + a uridine in tRNA + 2 reduced [2Fe-2S]-[ferredoxin] + ATP + H(+) = [ThiI sulfur-carrier protein]-L-cysteine + a 4-thiouridine in tRNA + 2 oxidized [2Fe-2S]-[ferredoxin] + AMP + diphosphate. It catalyses the reaction [ThiS sulfur-carrier protein]-C-terminal Gly-Gly-AMP + S-sulfanyl-L-cysteinyl-[cysteine desulfurase] + AH2 = [ThiS sulfur-carrier protein]-C-terminal-Gly-aminoethanethioate + L-cysteinyl-[cysteine desulfurase] + A + AMP + 2 H(+). It participates in cofactor biosynthesis; thiamine diphosphate biosynthesis. Catalyzes the ATP-dependent transfer of a sulfur to tRNA to produce 4-thiouridine in position 8 of tRNAs, which functions as a near-UV photosensor. Also catalyzes the transfer of sulfur to the sulfur carrier protein ThiS, forming ThiS-thiocarboxylate. This is a step in the synthesis of thiazole, in the thiamine biosynthesis pathway. The sulfur is donated as persulfide by IscS. This chain is Probable tRNA sulfurtransferase, found in Streptococcus agalactiae serotype Ia (strain ATCC 27591 / A909 / CDC SS700).